The primary structure comprises 395 residues: Probable sugar efflux transporter (395 aa).

A run of 12 helical transmembrane segments spans residues 13–33, 48–68, 82–102, 107–127, 134–154, 168–188, 207–227, 244–264, 272–292, 297–317, 331–351, and 363–383; these read VVSLSLAAFIFNTAEFAPVAL, VGLIITIYAWVVGLMSLPCML, IFILFAISNVLSGLAWNYWVL, IGVALSHAVFWSITASLVVRL, AQALSLLATGTALALVLGLPL, FVLIGLIAAVIMVGLMKLLPV, PALLCVYGLTVMIVTAHFTAY, FTTILLLIFGGAGIIGSMLFS, AGFLIVSFAFLAVCLLLLLPL, WSLSTLCIVWGIAIMALSLGM, VAMALYSGIYNIGIGGGALLG, and IGYMGAAMAILATVCCIFTFV.

Belongs to the major facilitator superfamily. SotB (TC 2.A.1.2) family.

Its subcellular location is the cell inner membrane. Involved in the efflux of sugars. The physiological role may be the reduction of the intracellular concentration of toxic sugars or sugar metabolites. The protein is Probable sugar efflux transporter of Pectobacterium atrosepticum (strain SCRI 1043 / ATCC BAA-672) (Erwinia carotovora subsp. atroseptica).